Reading from the N-terminus, the 275-residue chain is Large ribosomal subunit protein uL2c (275 aa).

Residues 224–263 (VMNPVDHPHGGGEGRAPIGRKRPLTPWGRPALGKKSRKNH) form a disordered region.

The protein belongs to the universal ribosomal protein uL2 family. In terms of assembly, part of the 50S ribosomal subunit.

The protein localises to the plastid. The protein resides in the chloroplast. This chain is Large ribosomal subunit protein uL2c (rpl2), found in Chaetosphaeridium globosum (Charophycean green alga).